The primary structure comprises 340 residues: DNA-directed RNA polymerase subunit alpha (340 aa).

The interval 1-233 (MIRDEISVST…DLFIPFLRAE (233 aa)) is alpha N-terminal domain (alpha-NTD). Residues 268–340 (AFKHIFIDQS…DLPKNKFQIH (73 aa)) form an alpha C-terminal domain (alpha-CTD) region.

This sequence belongs to the RNA polymerase alpha chain family. In plastids the minimal PEP RNA polymerase catalytic core is composed of four subunits: alpha, beta, beta', and beta''. When a (nuclear-encoded) sigma factor is associated with the core the holoenzyme is formed, which can initiate transcription.

It localises to the plastid. The protein localises to the chloroplast. It carries out the reaction RNA(n) + a ribonucleoside 5'-triphosphate = RNA(n+1) + diphosphate. DNA-dependent RNA polymerase catalyzes the transcription of DNA into RNA using the four ribonucleoside triphosphates as substrates. The polypeptide is DNA-directed RNA polymerase subunit alpha (Cycas taitungensis (Prince sago)).